The primary structure comprises 257 residues: NAD-capped RNA hydrolase NudC (257 aa).

Residues Lys-25 and Arg-69 each contribute to the substrate site. Zn(2+) is bound by residues Cys-98 and Cys-101. Substrate is bound at residue Glu-111. Zn(2+)-binding residues include Cys-116 and Cys-119. Tyr-124 contributes to the substrate binding site. The Nudix hydrolase domain occupies 125–248 (PQIAPCIIVA…TVARRLIEDT (124 aa)). Residues Ala-158, Glu-174, and Glu-178 each coordinate a divalent metal cation. The Nudix box motif lies at 159–180 (GFVEVGETLEQAVAREVMEESG). 192–199 (QPWPFPQS) provides a ligand contact to substrate. Glu-219 serves as a coordination point for a divalent metal cation. Ala-241 lines the substrate pocket.

This sequence belongs to the Nudix hydrolase family. NudC subfamily. As to quaternary structure, homodimer. The cofactor is Mg(2+). Mn(2+) serves as cofactor. Requires Zn(2+) as cofactor.

It carries out the reaction a 5'-end NAD(+)-phospho-ribonucleoside in mRNA + H2O = a 5'-end phospho-adenosine-phospho-ribonucleoside in mRNA + beta-nicotinamide D-ribonucleotide + 2 H(+). The catalysed reaction is NAD(+) + H2O = beta-nicotinamide D-ribonucleotide + AMP + 2 H(+). It catalyses the reaction NADH + H2O = reduced beta-nicotinamide D-ribonucleotide + AMP + 2 H(+). Functionally, mRNA decapping enzyme that specifically removes the nicotinamide adenine dinucleotide (NAD) cap from a subset of mRNAs by hydrolyzing the diphosphate linkage to produce nicotinamide mononucleotide (NMN) and 5' monophosphate mRNA. The NAD-cap is present at the 5'-end of some mRNAs and stabilizes RNA against 5'-processing. Has preference for mRNAs with a 5'-end purine. Catalyzes the hydrolysis of a broad range of dinucleotide pyrophosphates. The protein is NAD-capped RNA hydrolase NudC of Escherichia coli O45:K1 (strain S88 / ExPEC).